A 257-amino-acid polypeptide reads, in one-letter code: Deoxyribose-phosphate aldolase (257 aa).

Aspartate 102 functions as the Proton donor/acceptor in the catalytic mechanism. Lysine 166 acts as the Schiff-base intermediate with acetaldehyde in catalysis. Lysine 198 (proton donor/acceptor) is an active-site residue.

The protein belongs to the DeoC/FbaB aldolase family. DeoC type 2 subfamily.

The protein resides in the cytoplasm. The catalysed reaction is 2-deoxy-D-ribose 5-phosphate = D-glyceraldehyde 3-phosphate + acetaldehyde. It functions in the pathway carbohydrate degradation; 2-deoxy-D-ribose 1-phosphate degradation; D-glyceraldehyde 3-phosphate and acetaldehyde from 2-deoxy-alpha-D-ribose 1-phosphate: step 2/2. Its function is as follows. Catalyzes a reversible aldol reaction between acetaldehyde and D-glyceraldehyde 3-phosphate to generate 2-deoxy-D-ribose 5-phosphate. The protein is Deoxyribose-phosphate aldolase of Shewanella piezotolerans (strain WP3 / JCM 13877).